We begin with the raw amino-acid sequence, 324 residues long: Fructose-1,6-bisphosphatase class 1 (324 aa).

Residues Glu-88, Asp-107, Leu-109, and Asp-110 each contribute to the Mg(2+) site. Substrate contacts are provided by residues 110-113, Asn-199, and Lys-265; that span reads DGSS. Glu-271 contributes to the Mg(2+) binding site.

This sequence belongs to the FBPase class 1 family. In terms of assembly, homotetramer. Requires Mg(2+) as cofactor.

The protein resides in the cytoplasm. It carries out the reaction beta-D-fructose 1,6-bisphosphate + H2O = beta-D-fructose 6-phosphate + phosphate. It participates in carbohydrate biosynthesis; gluconeogenesis. This chain is Fructose-1,6-bisphosphatase class 1, found in Neisseria meningitidis serogroup B (strain ATCC BAA-335 / MC58).